The sequence spans 211 residues: MAEQHSTPEQAAAGKSHGGLGGSYKVIVYEMENFQGKRCELTAECPNLTESLLEKVGSIQVESGPWLAFERRAFRGEQYVLEKGDYPRWDAWSNSHHSDSLLSLRPLHIDGPDHKLHLFENPAFGGRKMEIVDDDVPSLWAHGFQDRVASVRAINGTWVGYEFPGYRGRQYVFERGEYRHWNEWDANQPQLQSVRRIRDQKWHKRGVFLSS.

Met1 bears the N-acetylmethionine mark. Ala2 bears the N-acetylalanine; in Beta-crystallin B3, N-terminally processed mark. Residues 2-23 (AEQHSTPEQAAAGKSHGGLGGS) form an N-terminal arm region. 2 consecutive Beta/gamma crystallin 'Greek key' domains span residues 24–63 (YKVI…QVES) and 64–108 (GPWL…RPLH). Residues 109-113 (IDGPD) are connecting peptide. Beta/gamma crystallin 'Greek key' domains lie at 114-155 (HKLH…RAIN) and 156-198 (GTWV…RRIR). The tract at residues 200 to 211 (QKWHKRGVFLSS) is C-terminal arm.

The protein belongs to the beta/gamma-crystallin family. As to quaternary structure, homo/heterodimer, or complexes of higher-order. The structure of beta-crystallin oligomers seems to be stabilized through interactions between the N-terminal arms.

Its function is as follows. Crystallins are the dominant structural components of the vertebrate eye lens. In Bos taurus (Bovine), this protein is Beta-crystallin B3 (CRYBB3).